We begin with the raw amino-acid sequence, 499 residues long: Low-affinity inorganic phosphate transporter PitB (499 aa).

The next 10 helical transmembrane spans lie at 5-25 (FVGL…FVLF), 52-72 (LAVV…GLSV), 94-114 (LAMV…TWFF), 124-144 (LIGA…SSVM), 155-175 (IFSS…GLIF), 207-227 (PFWT…SHGA), 233-253 (GIGL…VVNM), 382-402 (APVW…MIGW), 430-450 (AAVS…THVL), and 473-493 (ILMA…GLYW).

The protein belongs to the inorganic phosphate transporter (PiT) (TC 2.A.20) family. Pit subfamily.

Its subcellular location is the cell inner membrane. It catalyses the reaction phosphate(in) + H(+)(in) = phosphate(out) + H(+)(out). Functionally, low-affinity inorganic phosphate transporter. This is Low-affinity inorganic phosphate transporter PitB from Escherichia coli (strain K12).